The following is a 360-amino-acid chain: Isocitrate dehydrogenase [NAD] subunit 1, mitochondrial (360 aa).

Residues 1-11 constitute a mitochondrion transit peptide; sequence MLNRTIAKRTL. Residues arginine 109, arginine 140, and aspartate 228 each coordinate substrate. Aspartate 228 contributes to the Mg(2+) binding site.

It belongs to the isocitrate and isopropylmalate dehydrogenases family. In terms of assembly, octamer of two non-identical subunits IDH1 and IDH2. Mg(2+) is required as a cofactor. Requires Mn(2+) as cofactor.

The protein resides in the mitochondrion. It carries out the reaction D-threo-isocitrate + NAD(+) = 2-oxoglutarate + CO2 + NADH. Allosterically regulated by several compounds including AMP, NAD(+), and citrate. Functionally, performs an essential role in the oxidative function of the citric acid cycle. Also binds RNA; specifically to the 5'-untranslated leaders of mitochondrial mRNAs. The sequence is that of Isocitrate dehydrogenase [NAD] subunit 1, mitochondrial (IDH1) from Saccharomyces cerevisiae (strain ATCC 204508 / S288c) (Baker's yeast).